A 200-amino-acid polypeptide reads, in one-letter code: MNLKTVSGSAVELSEVAFGREFNEALVHQVVTAYLAGGRQGTRAHKSRADVSGGGKKPFRQKGTGRARAGSIRSPIWVGGGKTFAARPQDWSQKVNRKMYRGAMQCILAELVRQDRLVLVEEFAVAAPKTKELLAKLNDLNAARALIVTDAVDENLYLAARNLPHVDVVDATAIDPVSLIAFDKVVMSVAAAKKIEVELG.

The interval 42-65 (TRAHKSRADVSGGGKKPFRQKGTG) is disordered.

The protein belongs to the universal ribosomal protein uL4 family. As to quaternary structure, part of the 50S ribosomal subunit.

Functionally, one of the primary rRNA binding proteins, this protein initially binds near the 5'-end of the 23S rRNA. It is important during the early stages of 50S assembly. It makes multiple contacts with different domains of the 23S rRNA in the assembled 50S subunit and ribosome. Its function is as follows. Forms part of the polypeptide exit tunnel. This chain is Large ribosomal subunit protein uL4, found in Acinetobacter baumannii (strain AB307-0294).